Here is a 1147-residue protein sequence, read N- to C-terminus: Probable phospholipid-transporting ATPase IIB (1147 aa).

Residues 1 to 146 lie on the Cytoplasmic side of the membrane; that stretch reads MADQIPLYPV…NQKYNVFTFI (146 aa). The helical transmembrane segment at 147–168 threads the bilayer; that stretch reads PGVLYEQFKFFLNLYFLVISCS. Topologically, residues 169–173 are extracellular; it reads QFVPA. The helical transmembrane segment at 174–196 threads the bilayer; it reads LKIGYLYTYWAPLGFVLAVTMTR. Residues 197–380 are Cytoplasmic-facing; that stretch reads EAIDEFRRFQ…GLLDLELNRL (184 aa). A helical transmembrane segment spans residues 381 to 401; the sequence is TKALFLALVALSIVMVTLQGF. Over 402 to 409 the chain is Extracellular; that stretch reads VGPWYRNL. A helical transmembrane segment spans residues 410–431; sequence FRFLLLFSYIIPISLRVNLDMG. The Cytoplasmic segment spans residues 432–930; sequence KAVYGWMMMK…GRNSYKRSAA (499 aa). Asp468 serves as the catalytic 4-aspartylphosphate intermediate. The ATP site is built by Asp468, Lys469, and Thr470. Asp468 contacts Mg(2+). Thr470 serves as a coordination point for Mg(2+). The interval 503-535 is disordered; it reads RDSYSQMQSQAGGNNTGSTPLRKAQSSAPKVRK. A compositionally biased stretch (polar residues) spans 505-530; sequence SYSQMQSQAGGNNTGSTPLRKAQSSA. ATP is bound by residues Glu591, Phe633, Lys638, Lys657, Arg686, Thr687, Thr766, Gly767, Asp768, Arg848, and Lys854. Asp874 serves as a coordination point for Mg(2+). Positions 877 and 878 each coordinate ATP. Asp878 serves as a coordination point for Mg(2+). A helical membrane pass occupies residues 931–951; sequence LGQFVMHRGLIISTMQAVFSS. The Extracellular portion of the chain corresponds to 952 to 963; the sequence is VFYFASVPLYQG. The chain crosses the membrane as a helical span at residues 964–982; that stretch reads FLMVGYATIYTMFPVFSLV. Over 983–1012 the chain is Cytoplasmic; sequence LDQDVKPEMAMLYPELYKDLTKGRSLSFKT. The helical transmembrane segment at 1013–1031 threads the bilayer; sequence FLIWVLISIYQGGILMYGA. Over 1032 to 1038 the chain is Extracellular; the sequence is LVLFESE. A helical membrane pass occupies residues 1039–1061; it reads FVHVVAISFTALILTELLMVALT. Over 1062 to 1067 the chain is Cytoplasmic; it reads VRTWHW. Residues 1068–1088 traverse the membrane as a helical segment; that stretch reads LMVVAEFLSLGCYVSSLAFLN. The Extracellular segment spans residues 1089 to 1105; that stretch reads EYFGIGRVSFGAFLDVA. The chain crosses the membrane as a helical span at residues 1106–1130; that stretch reads FITTVTFLWKVSAITVVSCLPLYVL. Topologically, residues 1131-1147 are cytoplasmic; that stretch reads KYLRRKLSPPSYCKLAS.

It belongs to the cation transport ATPase (P-type) (TC 3.A.3) family. Type IV subfamily. Mg(2+) is required as a cofactor.

Its subcellular location is the golgi apparatus. The protein localises to the trans-Golgi network membrane. The catalysed reaction is ATP + H2O + phospholipidSide 1 = ADP + phosphate + phospholipidSide 2.. The sequence is that of Probable phospholipid-transporting ATPase IIB (ATP9B) from Homo sapiens (Human).